Reading from the N-terminus, the 609-residue chain is UvrABC system protein C (609 aa).

In terms of domain architecture, GIY-YIG spans 19 to 97; sequence ASPGCYLWKS…IKKHNPRFNV (79 aa). Positions 208 to 243 constitute a UVR domain; that stretch reads ESLVSDLNIKMSNASERLDFEKAARYRDMLQRIQNF.

This sequence belongs to the UvrC family. Interacts with UvrB in an incision complex.

It localises to the cytoplasm. Functionally, the UvrABC repair system catalyzes the recognition and processing of DNA lesions. UvrC both incises the 5' and 3' sides of the lesion. The N-terminal half is responsible for the 3' incision and the C-terminal half is responsible for the 5' incision. This chain is UvrABC system protein C, found in Leptospira interrogans serogroup Icterohaemorrhagiae serovar copenhageni (strain Fiocruz L1-130).